The primary structure comprises 1746 residues: tRNA (32-2'-O)-methyltransferase regulator THADA (1746 aa).

Positions 1252 to 1286 (EQALAEIRRIVVELKALQLRLKNTEAANTKLNTNV) form a coiled coil.

Belongs to the THADA family. As to quaternary structure, interacts with SERCA. As to expression, detected in the larval fat body, salivary glands and wing imaginal disks (at protein level).

The protein localises to the endoplasmic reticulum. Functionally, together with methyltransferase Trm7-32, methylates the 2'-O-ribose of nucleotides at position 32 of the anticodon loop of substrate tRNAs. Plays a key role in energy homeostasis by regulating the balance between energy storage and heat production. Functions by negatively regulating Ca(2+) signaling pathways that are involved in heat production and maintaining correct lipid storage in the fat body. Regulates Ca(2+) signaling pathways by reducing the activity of the calcium-transporting ATPase SERCA possibly by promoting uncoupling of SERCA ATP hydrolysis from calcium pumping. May also function in the nervous system to control feeding behavior. This chain is tRNA (32-2'-O)-methyltransferase regulator THADA, found in Drosophila melanogaster (Fruit fly).